The primary structure comprises 248 residues: Probable transcriptional regulatory protein Avi_3631 (248 aa).

It belongs to the TACO1 family.

The protein localises to the cytoplasm. The protein is Probable transcriptional regulatory protein Avi_3631 of Allorhizobium ampelinum (strain ATCC BAA-846 / DSM 112012 / S4) (Agrobacterium vitis (strain S4)).